The primary structure comprises 37 residues: Small ribosomal subunit protein eS32 (37 aa).

It belongs to the eukaryotic ribosomal protein eS32 family. As to quaternary structure, part of the small ribosomal subunit.

Interacts with N(4)-acetylcytidine (ac(4)C) 1459 of the small rRNA; the acetyl group of ac(4)C1459 briges the interaction with this protein. The sequence is that of Small ribosomal subunit protein eS32 (rpl41e) from Thermococcus kodakarensis (strain ATCC BAA-918 / JCM 12380 / KOD1) (Pyrococcus kodakaraensis (strain KOD1)).